The sequence spans 345 residues: Biotin synthase (345 aa).

In terms of domain architecture, Radical SAM core spans 38–256 (RQVQVSTLLS…IAVARIMMPA (219 aa)). [4Fe-4S] cluster-binding residues include Cys-53, Cys-57, and Cys-60. [2Fe-2S] cluster is bound by residues Cys-97, Cys-128, Cys-188, and Arg-260.

The protein belongs to the radical SAM superfamily. Biotin synthase family. Homodimer. [4Fe-4S] cluster is required as a cofactor. [2Fe-2S] cluster serves as cofactor.

The enzyme catalyses (4R,5S)-dethiobiotin + (sulfur carrier)-SH + 2 reduced [2Fe-2S]-[ferredoxin] + 2 S-adenosyl-L-methionine = (sulfur carrier)-H + biotin + 2 5'-deoxyadenosine + 2 L-methionine + 2 oxidized [2Fe-2S]-[ferredoxin]. Its pathway is cofactor biosynthesis; biotin biosynthesis; biotin from 7,8-diaminononanoate: step 2/2. Functionally, catalyzes the conversion of dethiobiotin (DTB) to biotin by the insertion of a sulfur atom into dethiobiotin via a radical-based mechanism. The protein is Biotin synthase of Serratia proteamaculans (strain 568).